The following is a 325-amino-acid chain: Eukaryotic translation initiation factor 3 subunit I (325 aa).

WD repeat units lie at residues 8–47 (GHER…RLGT), 50–91 (GHTG…ALLK), 144–183 (CNDS…VLVN), and 186–225 (EHSR…HQKT). Thr219 bears the Phosphothreonine mark. N6-acetyllysine is present on Lys264. Lys282 is covalently cross-linked (Glycyl lysine isopeptide (Lys-Gly) (interchain with G-Cter in ubiquitin)). The WD 5 repeat unit spans residues 283 to 324 (GHFGPINSVAFHPDGKSYSSGGEDGYVRIHYFDPQYFEFEFE). A Phosphotyrosine modification is found at Tyr308.

This sequence belongs to the eIF-3 subunit I family. In terms of assembly, component of the eukaryotic translation initiation factor 3 (eIF-3) complex, which is composed of 13 subunits: EIF3A, EIF3B, EIF3C, EIF3D, EIF3E, EIF3F, EIF3G, EIF3H, EIF3I, EIF3J, EIF3K, EIF3L and EIF3M. The eIF-3 complex appears to include 3 stable modules: module A is composed of EIF3A, EIF3B, EIF3G and EIF3I; module B is composed of EIF3F, EIF3H, and EIF3M; and module C is composed of EIF3C, EIF3D, EIF3E, EIF3K and EIF3L. EIF3C of module C binds EIF3B of module A and EIF3H of module B, thereby linking the three modules. EIF3J is a labile subunit that binds to the eIF-3 complex via EIF3B. The eIF-3 complex interacts with RPS6KB1 under conditions of nutrient depletion. Mitogenic stimulation leads to binding and activation of a complex composed of MTOR and RPTOR, leading to phosphorylation and release of RPS6KB1 and binding of EIF4B to eIF-3. Phosphorylated by TGF-beta type II receptor.

The protein localises to the cytoplasm. In terms of biological role, component of the eukaryotic translation initiation factor 3 (eIF-3) complex, which is required for several steps in the initiation of protein synthesis. The eIF-3 complex associates with the 40S ribosome and facilitates the recruitment of eIF-1, eIF-1A, eIF-2:GTP:methionyl-tRNAi and eIF-5 to form the 43S pre-initiation complex (43S PIC). The eIF-3 complex stimulates mRNA recruitment to the 43S PIC and scanning of the mRNA for AUG recognition. The eIF-3 complex is also required for disassembly and recycling of post-termination ribosomal complexes and subsequently prevents premature joining of the 40S and 60S ribosomal subunits prior to initiation. The eIF-3 complex specifically targets and initiates translation of a subset of mRNAs involved in cell proliferation, including cell cycling, differentiation and apoptosis, and uses different modes of RNA stem-loop binding to exert either translational activation or repression. This Bos taurus (Bovine) protein is Eukaryotic translation initiation factor 3 subunit I.